Consider the following 355-residue polypeptide: UDP-N-acetylglucosamine--N-acetylmuramyl-(pentapeptide) pyrophosphoryl-undecaprenol N-acetylglucosamine transferase (355 aa).

UDP-N-acetyl-alpha-D-glucosamine-binding positions include 15–17, asparagine 127, arginine 163, serine 191, isoleucine 244, 263–268, and glutamine 288; these read TGG and ALTVSE.

The protein belongs to the glycosyltransferase 28 family. MurG subfamily.

It localises to the cell inner membrane. The enzyme catalyses di-trans,octa-cis-undecaprenyl diphospho-N-acetyl-alpha-D-muramoyl-L-alanyl-D-glutamyl-meso-2,6-diaminopimeloyl-D-alanyl-D-alanine + UDP-N-acetyl-alpha-D-glucosamine = di-trans,octa-cis-undecaprenyl diphospho-[N-acetyl-alpha-D-glucosaminyl-(1-&gt;4)]-N-acetyl-alpha-D-muramoyl-L-alanyl-D-glutamyl-meso-2,6-diaminopimeloyl-D-alanyl-D-alanine + UDP + H(+). Its pathway is cell wall biogenesis; peptidoglycan biosynthesis. Its function is as follows. Cell wall formation. Catalyzes the transfer of a GlcNAc subunit on undecaprenyl-pyrophosphoryl-MurNAc-pentapeptide (lipid intermediate I) to form undecaprenyl-pyrophosphoryl-MurNAc-(pentapeptide)GlcNAc (lipid intermediate II). The chain is UDP-N-acetylglucosamine--N-acetylmuramyl-(pentapeptide) pyrophosphoryl-undecaprenol N-acetylglucosamine transferase from Salmonella choleraesuis (strain SC-B67).